The following is a 192-amino-acid chain: Transposon Tn552 DNA-invertase BinR (192 aa).

The Resolvase/invertase-type recombinase catalytic domain maps to 1 to 136 (MKIGYARVST…AGRIAARARG (136 aa)). Residue S9 is the O-(5'-phospho-DNA)-serine intermediate of the active site. Positions 163–182 (IKTIAEQWKVSRTTIYRYLN) form a DNA-binding region, H-T-H motif.

Belongs to the site-specific recombinase resolvase family.

In terms of biological role, DNA-invertase, mediating the inversion of inv. This Staphylococcus aureus protein is Transposon Tn552 DNA-invertase BinR (resR).